Here is a 406-residue protein sequence, read N- to C-terminus: Probable delta-aminolevulinic acid dehydratase 2, chloroplastic (406 aa).

A chloroplast-targeting transit peptide spans 1-34 (MTSSMFRSPCKIPSVKGFEQKSYVGLKAASYNVR). Lys-275 (schiff-base intermediate with substrate) is an active-site residue. 5-aminolevulinate-binding residues include Arg-285 and Lys-291. Glu-307 serves as a coordination point for Mg(2+). Lys-322 functions as the Schiff-base intermediate with substrate in the catalytic mechanism. 2 residues coordinate 5-aminolevulinate: Ser-348 and Tyr-387.

It belongs to the ALAD family. In terms of assembly, homooctamer. Mg(2+) serves as cofactor.

It localises to the plastid. Its subcellular location is the chloroplast. It carries out the reaction 2 5-aminolevulinate = porphobilinogen + 2 H2O + H(+). The protein operates within porphyrin-containing compound metabolism; protoporphyrin-IX biosynthesis; coproporphyrinogen-III from 5-aminolevulinate: step 1/4. It functions in the pathway porphyrin-containing compound metabolism; chlorophyll biosynthesis. Its function is as follows. Catalyzes an early step in the biosynthesis of tetrapyrroles. Binds two molecules of 5-aminolevulinate per subunit, each at a distinct site, and catalyzes their condensation to form porphobilinogen. This Arabidopsis thaliana (Mouse-ear cress) protein is Probable delta-aminolevulinic acid dehydratase 2, chloroplastic (HEMB2).